A 482-amino-acid polypeptide reads, in one-letter code: ATP synthase subunit beta (482 aa).

ATP is bound at residue 162-169 (GGAGVGKT).

This sequence belongs to the ATPase alpha/beta chains family. As to quaternary structure, F-type ATPases have 2 components, CF(1) - the catalytic core - and CF(0) - the membrane proton channel. CF(1) has five subunits: alpha(3), beta(3), gamma(1), delta(1), epsilon(1). CF(0) has four main subunits: a(1), b(1), b'(1) and c(9-12).

The protein resides in the cellular thylakoid membrane. The catalysed reaction is ATP + H2O + 4 H(+)(in) = ADP + phosphate + 5 H(+)(out). In terms of biological role, produces ATP from ADP in the presence of a proton gradient across the membrane. The catalytic sites are hosted primarily by the beta subunits. The sequence is that of ATP synthase subunit beta from Nostoc sp. (strain PCC 7120 / SAG 25.82 / UTEX 2576).